Consider the following 131-residue polypeptide: Insertion element IS1 protein InsB (131 aa).

This sequence belongs to the transposase 27 family.

Absolutely required for transposition of IS1. The polypeptide is Insertion element IS1 protein InsB (insB) (Shigella sonnei).